The primary structure comprises 360 residues: MSNSNSGKVRVAVVYGGRSSEHSVSCVSAGAIMAHLDPEKYDVIPVGITVDGAWVVGETDPQKLTLIDRTMPEVEHREEVRPSLDPAHRGEFHFSDGSLYATADVIFPVLHGRFGEDGTVQGLFALSDIPVVGPGVLASAAGMDKEYTKKLMAAEGLPIGREVILRDRTELTEAEKNLLGLPVFVKPARGGSSIGISRVTAWEDFNKAVGLARAHDEKVIVESEIVGSEVECGVLQYPDGRIVASVPALLSGTESGAGGFYDFDTKYLDNVVTAEIPAPLDEKTTELIQSLAVESFQALACEGLARVDFFVTANGPVLNEINTMPGFTPISMYPQMFTASGVAYEELLDVLVQQALHRDN.

The ATP-grasp domain occupies 149–353; the sequence is KKLMAAEGLP…YEELLDVLVQ (205 aa). 176–231 is an ATP binding site; sequence KNLLGLPVFVKPARGGSSIGISRVTAWEDFNKAVGLARAHDEKVIVESEIVGSEVE. Positions 308, 320, and 322 each coordinate Mg(2+).

Belongs to the D-alanine--D-alanine ligase family. The cofactor is Mg(2+). It depends on Mn(2+) as a cofactor.

The protein localises to the cytoplasm. The catalysed reaction is 2 D-alanine + ATP = D-alanyl-D-alanine + ADP + phosphate + H(+). The protein operates within cell wall biogenesis; peptidoglycan biosynthesis. In terms of biological role, cell wall formation. The polypeptide is D-alanine--D-alanine ligase (Corynebacterium glutamicum (strain R)).